The following is a 381-amino-acid chain: Chaperone protein DnaJ (381 aa).

In terms of domain architecture, J spans 5–69 (DYYEVLGVSK…EKRARYDRFG (65 aa)). The CR-type zinc finger occupies 136–218 (GKETEIEVPH…CGGTGHVKKR (83 aa)). Residues Cys-149, Cys-152, Cys-166, Cys-169, Cys-192, Cys-195, Cys-206, and Cys-209 each contribute to the Zn(2+) site. CXXCXGXG motif repeat units follow at residues 149 to 156 (CDTCHGSG), 166 to 173 (CPHCHGSG), 192 to 199 (CPVCGGTG), and 206 to 213 (CPTCGGTG). Residues 154–174 (GSGAKPGTSPQSCPHCHGSGQ) are disordered.

Belongs to the DnaJ family. As to quaternary structure, homodimer. The cofactor is Zn(2+).

The protein localises to the cytoplasm. Participates actively in the response to hyperosmotic and heat shock by preventing the aggregation of stress-denatured proteins and by disaggregating proteins, also in an autonomous, DnaK-independent fashion. Unfolded proteins bind initially to DnaJ; upon interaction with the DnaJ-bound protein, DnaK hydrolyzes its bound ATP, resulting in the formation of a stable complex. GrpE releases ADP from DnaK; ATP binding to DnaK triggers the release of the substrate protein, thus completing the reaction cycle. Several rounds of ATP-dependent interactions between DnaJ, DnaK and GrpE are required for fully efficient folding. Also involved, together with DnaK and GrpE, in the DNA replication of plasmids through activation of initiation proteins. In Geobacillus thermodenitrificans (strain NG80-2), this protein is Chaperone protein DnaJ.